A 1218-amino-acid chain; its full sequence is Thrombospondin type 1 domain-containing protein (1218 aa).

Disordered regions lie at residues 82–101 (SAGF…PCSS), 189–240 (SLEE…SRTR), 298–383 (HTAN…VNGL), and 445–471 (GGKS…SHRG). Basic and acidic residues predominate over residues 201-210 (GYEEERERRS). A compositionally biased stretch (low complexity) spans 315-375 (SSRFTSKASS…SSPLSSSPDS (61 aa)). A TSP type-1 domain is found at 638–704 (SCITGPWSEW…RRKCNLGACP (67 aa)). Residues 886–906 (GVSHLWISLCAGAVAAVVFLV) traverse the membrane as a helical segment. The tract at residues 1129 to 1153 (RRRARRGRREGDSGEGGDCGEARKA) is disordered.

As to quaternary structure, component of a complex, at least composed of cysteine repeat modular protein A (CRMPa), cysteine repeat modular protein B (CRMPb), micronemal protein 15 (MIC15) and thrombospondin type 1 domain-containing protein (TSP1).

The protein resides in the membrane. In terms of biological role, required for rhoptry secretion. Plays a role in host cell invasion. The sequence is that of Thrombospondin type 1 domain-containing protein from Toxoplasma gondii.